A 345-amino-acid chain; its full sequence is Mitochondrial substrate carrier family protein J (345 aa).

Residues 1–31 (MSSSHTIQETKEVHTKTNKRIQWDDLDPKRY) are Mitochondrial intermembrane-facing. Solcar repeat units follow at residues 30–118 (RYYF…VKQG), 129–217 (DLLF…SKSK), and 255–342 (EDPI…VKKL). Residues 32–52 (YFYNFLLGGSIDLLMFPLDVI) traverse the membrane as a helical segment. At 53–88 (RTRLQVQGSQNVIQSFPQYNGTFDGFKKLIRLEGKR) the chain is on the mitochondrial matrix side. Residues 89–110 (ALYKGFLTSECGYLCSRAIYFG) form a helical membrane-spanning segment. Over 111-129 (SYEFVKQGFLKGRSDSDSD) the chain is Mitochondrial intermembrane. Residues 130–150 (LLFVTTISGAISEALASVIWV) form a helical membrane-spanning segment. The Mitochondrial matrix portion of the chain corresponds to 151-191 (PFDVATQSVQIQGSLSKPKYKGGSDVFKKIYGERGIKGLYK). Residues 192 to 208 (GFGATIIRNVPYSGIWW) form a helical membrane-spanning segment. Residues 209-257 (GTYEISKSKLTQFNIRQKLGLKERSSHSLAVSAEIDKNNPSHEVENEDP) are Mitochondrial intermembrane-facing. The helical transmembrane segment at 258–278 (IIHFISGFFAAVFATSITNPL) threads the bilayer. Over 279–316 (DVAKTRLQTGVFPENEKPNFYTIIKSTIRKEGIRALWK) the chain is Mitochondrial matrix. The helical transmembrane segment at 317–337 (GLVPSLLTSTPYSMISIFLYE) threads the bilayer. The Mitochondrial intermembrane segment spans residues 338–345 (EVKKLSLK).

Belongs to the mitochondrial carrier (TC 2.A.29) family.

The protein localises to the mitochondrion inner membrane. Functionally, mitochondrial solute carriers shuttle metabolites, nucleotides, and cofactors through the mitochondrial inner membrane. The sequence is that of Mitochondrial substrate carrier family protein J (mcfJ) from Dictyostelium discoideum (Social amoeba).